Consider the following 446-residue polypeptide: Argininosuccinate lyase (446 aa).

Belongs to the lyase 1 family. Argininosuccinate lyase subfamily.

It is found in the cytoplasm. It carries out the reaction 2-(N(omega)-L-arginino)succinate = fumarate + L-arginine. Its pathway is amino-acid biosynthesis; L-arginine biosynthesis; L-arginine from L-ornithine and carbamoyl phosphate: step 3/3. The sequence is that of Argininosuccinate lyase from Phocaeicola vulgatus (strain ATCC 8482 / DSM 1447 / JCM 5826 / CCUG 4940 / NBRC 14291 / NCTC 11154) (Bacteroides vulgatus).